A 183-amino-acid polypeptide reads, in one-letter code: Probable chemoreceptor glutamine deamidase CheD (183 aa).

Belongs to the CheD family.

The catalysed reaction is L-glutaminyl-[protein] + H2O = L-glutamyl-[protein] + NH4(+). In terms of biological role, probably deamidates glutamine residues to glutamate on methyl-accepting chemotaxis receptors (MCPs), playing an important role in chemotaxis. The sequence is that of Probable chemoreceptor glutamine deamidase CheD from Sinorhizobium medicae (strain WSM419) (Ensifer medicae).